Consider the following 292-residue polypeptide: tRNA (adenine(9)-N1)-methyltransferase (292 aa).

Positions threonine 72–isoleucine 253 constitute an SAM-dependent MTase TRM10-type domain.

Belongs to the class IV-like SAM-binding methyltransferase superfamily. TRM10 family.

Its subcellular location is the cytoplasm. The catalysed reaction is adenosine(9) in tRNA + S-adenosyl-L-methionine = N(1)-methyladenosine(9) in tRNA + S-adenosyl-L-homocysteine + H(+). In terms of biological role, catalyzes the S-adenosyl-L-methionine-dependent formation of N(1)-methyladenine at position 9 (m1A9) in tRNA. In Sulfolobus acidocaldarius (strain ATCC 33909 / DSM 639 / JCM 8929 / NBRC 15157 / NCIMB 11770), this protein is tRNA (adenine(9)-N1)-methyltransferase.